Reading from the N-terminus, the 336-residue chain is Glycerol-3-phosphate dehydrogenase [NAD(P)+] (336 aa).

NADPH contacts are provided by S11, W12, R32, and K109. K109, G140, and S142 together coordinate sn-glycerol 3-phosphate. NADPH is bound at residue A144. Sn-glycerol 3-phosphate-binding residues include K195, D248, S258, R259, and N260. The Proton acceptor role is filled by K195. Position 259 (R259) interacts with NADPH. Residues V283 and E285 each coordinate NADPH.

It belongs to the NAD-dependent glycerol-3-phosphate dehydrogenase family.

The protein localises to the cytoplasm. The enzyme catalyses sn-glycerol 3-phosphate + NAD(+) = dihydroxyacetone phosphate + NADH + H(+). It catalyses the reaction sn-glycerol 3-phosphate + NADP(+) = dihydroxyacetone phosphate + NADPH + H(+). Its pathway is membrane lipid metabolism; glycerophospholipid metabolism. In terms of biological role, catalyzes the reduction of the glycolytic intermediate dihydroxyacetone phosphate (DHAP) to sn-glycerol 3-phosphate (G3P), the key precursor for phospholipid synthesis. The polypeptide is Glycerol-3-phosphate dehydrogenase [NAD(P)+] (Leuconostoc mesenteroides subsp. mesenteroides (strain ATCC 8293 / DSM 20343 / BCRC 11652 / CCM 1803 / JCM 6124 / NCDO 523 / NBRC 100496 / NCIMB 8023 / NCTC 12954 / NRRL B-1118 / 37Y)).